The following is a 272-amino-acid chain: Small ribosomal subunit protein uS2 (272 aa).

Positions 244 to 272 are disordered; that stretch reads EDDYEGAEGDLDLDSANEEESLEDNNEEE.

The protein belongs to the universal ribosomal protein uS2 family.

This chain is Small ribosomal subunit protein uS2, found in Trichodesmium erythraeum (strain IMS101).